The sequence spans 395 residues: Putative 8-amino-7-oxononanoate synthase (395 aa).

Substrate is bound at residue arginine 23. 110-111 (GF) is a binding site for pyridoxal 5'-phosphate. Histidine 135 provides a ligand contact to substrate. Pyridoxal 5'-phosphate contacts are provided by residues serine 182, 207 to 210 (DEAH), and 239 to 242 (TFSK). N6-(pyridoxal phosphate)lysine is present on lysine 242. Threonine 356 contributes to the substrate binding site.

Belongs to the class-II pyridoxal-phosphate-dependent aminotransferase family. BioF subfamily. As to quaternary structure, homodimer. It depends on pyridoxal 5'-phosphate as a cofactor.

The enzyme catalyses 6-carboxyhexanoyl-[ACP] + L-alanine + H(+) = (8S)-8-amino-7-oxononanoate + holo-[ACP] + CO2. The protein operates within cofactor biosynthesis; biotin biosynthesis. Functionally, catalyzes the decarboxylative condensation of pimeloyl-[acyl-carrier protein] and L-alanine to produce 8-amino-7-oxononanoate (AON), [acyl-carrier protein], and carbon dioxide. The protein is Putative 8-amino-7-oxononanoate synthase (bioF) of Bacillus anthracis.